A 271-amino-acid chain; its full sequence is Tetraspanin-11 (271 aa).

Residues 1–7 are Cytoplasmic-facing; it reads MFRVSNF. The helical transmembrane segment at 8 to 28 threads the bilayer; that stretch reads MVGLANTLVMLVGASAIGYSI. The Extracellular segment spans residues 29-44; that stretch reads YMFVHQGVTDCESAIR. Residues 45–65 form a helical membrane-spanning segment; that stretch reads IPLLTTGLILFLVSLLGVIGS. The Cytoplasmic segment spans residues 66–76; that stretch reads CFKENLAMVSY. Residues 77 to 97 traverse the membrane as a helical segment; that stretch reads LIILFGGIVALMIFSIFLFFV. Residues 98-236 lie on the Extracellular side of the membrane; sequence TNKGAGRVVS…LANIREKWRN (139 aa). 2 N-linked (GlcNAc...) asparagine glycosylation sites follow: asparagine 185 and asparagine 195. A helical transmembrane segment spans residues 237 to 257; that stretch reads LLVFNICLLILLITVYSCGCC. The Cytoplasmic portion of the chain corresponds to 258 to 271; that stretch reads ARRNNRTARKSDSV.

The protein belongs to the tetraspanin (TM4SF) family.

Its subcellular location is the membrane. May be involved in the regulation of cell differentiation. The polypeptide is Tetraspanin-11 (TET11) (Arabidopsis thaliana (Mouse-ear cress)).